A 295-amino-acid chain; its full sequence is Ribosomal RNA small subunit methyltransferase A (295 aa).

Residues N29, L31, G56, E77, D102, and N128 each coordinate S-adenosyl-L-methionine.

This sequence belongs to the class I-like SAM-binding methyltransferase superfamily. rRNA adenine N(6)-methyltransferase family. RsmA subfamily.

Its subcellular location is the cytoplasm. The enzyme catalyses adenosine(1518)/adenosine(1519) in 16S rRNA + 4 S-adenosyl-L-methionine = N(6)-dimethyladenosine(1518)/N(6)-dimethyladenosine(1519) in 16S rRNA + 4 S-adenosyl-L-homocysteine + 4 H(+). In terms of biological role, specifically dimethylates two adjacent adenosines (A1518 and A1519) in the loop of a conserved hairpin near the 3'-end of 16S rRNA in the 30S particle. May play a critical role in biogenesis of 30S subunits. This chain is Ribosomal RNA small subunit methyltransferase A, found in Listeria welshimeri serovar 6b (strain ATCC 35897 / DSM 20650 / CCUG 15529 / CIP 8149 / NCTC 11857 / SLCC 5334 / V8).